The chain runs to 396 residues: Tyrosine--tRNA ligase (396 aa).

A 'HIGH' region motif is present at residues 39–48 (PTAPDLHLGH). A 'KMSKS' region motif is present at residues 223–227 (KMSKS). Lys226 serves as a coordination point for ATP. The S4 RNA-binding domain maps to 334 to 395 (LPVPQLLKQA…GKRKFARVTV (62 aa)).

Belongs to the class-I aminoacyl-tRNA synthetase family. TyrS type 2 subfamily. As to quaternary structure, homodimer.

It localises to the cytoplasm. The catalysed reaction is tRNA(Tyr) + L-tyrosine + ATP = L-tyrosyl-tRNA(Tyr) + AMP + diphosphate + H(+). Functionally, catalyzes the attachment of tyrosine to tRNA(Tyr) in a two-step reaction: tyrosine is first activated by ATP to form Tyr-AMP and then transferred to the acceptor end of tRNA(Tyr). This Thiobacillus denitrificans (strain ATCC 25259 / T1) protein is Tyrosine--tRNA ligase.